We begin with the raw amino-acid sequence, 323 residues long: Cuticle collagen 39 (323 aa).

Positions 1–28 (MTGPTCLAVVAGISGVFVFGALFSVAQI) are cleaved as a signal peptide. Residues 80 to 89 (QCNCGPQASN) are compositionally biased toward polar residues. Residues 80 to 293 (QCNCGPQASN…GAAEQGYRHR (214 aa)) are disordered. 3 triple-helical region regions span residues 93–125 (GPPG…AGPK), 138–200 (GSPG…GGQR), and 203–265 (GLPG…PGAD). Residues 108 to 117 (GQPGGAGNPG) are compositionally biased toward gly residues. Residues 136 to 146 (PAGSPGPAGAP) are compositionally biased toward low complexity. The segment covering 159–168 (GHPGQGGSQG) has biased composition (gly residues). The span at 169–191 (PAGPRGPAGDAGAPGQVGAPGNP) shows a compositional bias: low complexity. The segment covering 224–233 (GQSGGQGQQG) has biased composition (gly residues). Residues 234 to 267 (PAGPAGPDGQPGQPGQDGQAGAPGNDGAPGADAA) are compositionally biased toward low complexity.

The protein belongs to the cuticular collagen family. As to quaternary structure, collagen polypeptide chains are complexed within the cuticle by disulfide bonds and other types of covalent cross-links.

Functionally, nematode cuticles are composed largely of collagen-like proteins. The cuticle functions both as an exoskeleton and as a barrier to protect the worm from its environment. The sequence is that of Cuticle collagen 39 (col-39) from Caenorhabditis elegans.